Here is a 152-residue protein sequence, read N- to C-terminus: MAGFIGKERHAIDEKGRLMIPARFRRKFESVTVEGVADAFSGLYIMKAPDRSLELYEPLIWAGMRKSLSGLSDFNPEERLLKTLMYESLEMVELDRQGRVALSREFLDHAGITKDVVIIGADTKMIIWDPQRLAALLQESADRFASLAGRYF.

2 SpoVT-AbrB domains span residues 7-51 (KERH…APDR) and 89-132 (LEMV…DPQR).

The protein belongs to the MraZ family. As to quaternary structure, forms oligomers.

The protein resides in the cytoplasm. It localises to the nucleoid. This Pelodictyon phaeoclathratiforme (strain DSM 5477 / BU-1) protein is Transcriptional regulator MraZ.